Consider the following 115-residue polypeptide: MTGKGQGFGFGLGKMKELAEAFKKAQQVQEGAKRLQEELEQMEILGEAGGGLVKVIVSGNQEPKRVEISPDALAQGADLLSDLVTAAMKDAYIKSTATMRERMEDLTSGLELPGF.

It belongs to the YbaB/EbfC family. As to quaternary structure, homodimer.

Its subcellular location is the cytoplasm. The protein localises to the nucleoid. In terms of biological role, binds to DNA and alters its conformation. May be involved in regulation of gene expression, nucleoid organization and DNA protection. The protein is Nucleoid-associated protein Ava_2322 of Trichormus variabilis (strain ATCC 29413 / PCC 7937) (Anabaena variabilis).